The sequence spans 333 residues: DNA-directed RNA polymerase subunit alpha (333 aa).

Positions 1-234 are alpha N-terminal domain (alpha-NTD); the sequence is MQISVNEFLT…QQLAAFVDLK (234 aa). An alpha C-terminal domain (alpha-CTD) region spans residues 248–333; sequence IDPILLRPVD…SLKKDDKATA (86 aa).

This sequence belongs to the RNA polymerase alpha chain family. As to quaternary structure, homodimer. The RNAP catalytic core consists of 2 alpha, 1 beta, 1 beta' and 1 omega subunit. When a sigma factor is associated with the core the holoenzyme is formed, which can initiate transcription.

It catalyses the reaction RNA(n) + a ribonucleoside 5'-triphosphate = RNA(n+1) + diphosphate. In terms of biological role, DNA-dependent RNA polymerase catalyzes the transcription of DNA into RNA using the four ribonucleoside triphosphates as substrates. The sequence is that of DNA-directed RNA polymerase subunit alpha from Pseudomonas fluorescens (strain ATCC BAA-477 / NRRL B-23932 / Pf-5).